A 230-amino-acid chain; its full sequence is Urease accessory protein UreF (230 aa).

It belongs to the UreF family. In terms of assembly, ureD, UreF and UreG form a complex that acts as a GTP-hydrolysis-dependent molecular chaperone, activating the urease apoprotein by helping to assemble the nickel containing metallocenter of UreC. The UreE protein probably delivers the nickel.

It is found in the cytoplasm. Functionally, required for maturation of urease via the functional incorporation of the urease nickel metallocenter. This chain is Urease accessory protein UreF, found in Cupriavidus necator (strain ATCC 17699 / DSM 428 / KCTC 22496 / NCIMB 10442 / H16 / Stanier 337) (Ralstonia eutropha).